The following is a 91-amino-acid chain: MDIKLINIGFGNIVSARRIVAIVSPESAPIKRIIQEARDRGMLIDATYGRRTRAVIITDSDHIILSAVQPETVAHRLSSREPLASAEEPVD.

This sequence belongs to the RemA family.

The sequence is that of Putative regulatory protein Moth_0891 from Moorella thermoacetica (strain ATCC 39073 / JCM 9320).